We begin with the raw amino-acid sequence, 66 residues long: Large ribosomal subunit protein bL33B (66 aa).

The protein belongs to the bacterial ribosomal protein bL33 family.

The chain is Large ribosomal subunit protein bL33B from Synechococcus sp. (strain CC9605).